A 156-amino-acid polypeptide reads, in one-letter code: Transcriptional repressor NrdR (156 aa).

A zinc finger spans residues 3–34 (CPFCGNVDTQVKDSRPAEDHVAIRRRRFCPAC). Positions 49–139 (LVVIKSNGKR…VYKNFQATGD (91 aa)) constitute an ATP-cone domain.

This sequence belongs to the NrdR family. Requires Zn(2+) as cofactor.

In terms of biological role, negatively regulates transcription of bacterial ribonucleotide reductase nrd genes and operons by binding to NrdR-boxes. This chain is Transcriptional repressor NrdR, found in Jannaschia sp. (strain CCS1).